We begin with the raw amino-acid sequence, 88 residues long: MAAKSARKGPTKAKKNLLDSLGVESVDYKDTATLRVFISDRGKIRSRGVTGLTVQQQRQVAQAIKNAREMALLPYPGQDRQRRAALCP.

This sequence belongs to the bacterial ribosomal protein bS18 family. As to quaternary structure, part of the 30S ribosomal subunit. Forms a tight heterodimer with protein bS6.

Its function is as follows. Binds as a heterodimer with protein bS6 to the central domain of the 16S rRNA, where it helps stabilize the platform of the 30S subunit. The protein is Small ribosomal subunit protein bS18B (rpsR2) of Mycobacterium bovis (strain ATCC BAA-935 / AF2122/97).